A 434-amino-acid chain; its full sequence is MQVSVETTQGLERRLTISVPAEQIENTVKEALKSEAKRARIPGFRPGKVPVSVINKRYGNAIRQDITGEVMQRNFIEAIIAEKLNPAGAPTFTPGSTEGENFEFVATFEIYPEVELKGLESITVEQPTAEVTEADVDSMIETLRNQHATFEVAERAAAEGDKAKINFVGSIDGEEFEGGKADDFELQLGSGRMIPGFESGVEGHKAGEEFNIEVTFPEDYHAENLKGKVATFAITLNEVQAANLPEVNDEFATLFGITEGGIDALRGEISKNMSRELEQALKANVKEQVLNGLVEQNDIELPAALIDGEVEVLRKQAMQRFGDQAANMPELPADLFTEQAARRVKVGLLLGEVIKANELKAEDERVQALIASMASAYEDPSEVVAYYNGNEELMQNMRNVALEEQAVEALLKTATLTEKAVNFEEFMNKATGRA.

The PPIase FKBP-type domain occupies 160–245; it reads GDKAKINFVG…LNEVQAANLP (86 aa).

It belongs to the FKBP-type PPIase family. Tig subfamily.

Its subcellular location is the cytoplasm. The catalysed reaction is [protein]-peptidylproline (omega=180) = [protein]-peptidylproline (omega=0). Its function is as follows. Involved in protein export. Acts as a chaperone by maintaining the newly synthesized protein in an open conformation. Functions as a peptidyl-prolyl cis-trans isomerase. The polypeptide is Trigger factor (Shewanella halifaxensis (strain HAW-EB4)).